We begin with the raw amino-acid sequence, 422 residues long: F-box/FBD/LRR-repeat protein At5g56420 (422 aa).

The F-box domain occupies 5-54; that stretch reads RDRLSQLPDDFLLQILSWLPTKDVLVTSLLSKRWRFLWTLVPRLNYDLRL. LRR repeat units lie at residues 59-85, 136-163, 164-189, 193-212, 214-238, 279-304, and 305-330; these read CPRF…NIKI, VLKL…HLLD, VKYL…VVQR, DNVK…SLHK, SQAF…DIED, LCLI…ELCT, and CAPR…KLRQ. An FBD domain is found at 342–391; it reads SWKQPALPKCLLFHLETFKWELYEGSQKQKEVATFILKHAIRLKTAIISP.

This chain is F-box/FBD/LRR-repeat protein At5g56420, found in Arabidopsis thaliana (Mouse-ear cress).